We begin with the raw amino-acid sequence, 294 residues long: Nucleotide-binding protein Smlt1108 (294 aa).

Residue 16–23 coordinates ATP; that stretch reads GLSGSGKS. Residue 69–72 participates in GTP binding; the sequence is DVRG.

This sequence belongs to the RapZ-like family.

Functionally, displays ATPase and GTPase activities. In Stenotrophomonas maltophilia (strain K279a), this protein is Nucleotide-binding protein Smlt1108.